A 378-amino-acid chain; its full sequence is Succinyl-diaminopimelate desuccinylase (378 aa).

His68 is a binding site for Zn(2+). Residue Asp70 is part of the active site. Zn(2+) is bound at residue Asp101. Catalysis depends on Glu135, which acts as the Proton acceptor. Zn(2+) contacts are provided by Glu136, Glu164, and His350.

Belongs to the peptidase M20A family. DapE subfamily. Homodimer. The cofactor is Zn(2+). It depends on Co(2+) as a cofactor.

The catalysed reaction is N-succinyl-(2S,6S)-2,6-diaminopimelate + H2O = (2S,6S)-2,6-diaminopimelate + succinate. It functions in the pathway amino-acid biosynthesis; L-lysine biosynthesis via DAP pathway; LL-2,6-diaminopimelate from (S)-tetrahydrodipicolinate (succinylase route): step 3/3. Catalyzes the hydrolysis of N-succinyl-L,L-diaminopimelic acid (SDAP), forming succinate and LL-2,6-diaminopimelate (DAP), an intermediate involved in the bacterial biosynthesis of lysine and meso-diaminopimelic acid, an essential component of bacterial cell walls. This is Succinyl-diaminopimelate desuccinylase from Vibrio campbellii (strain ATCC BAA-1116).